The chain runs to 473 residues: Endoglucanase B (473 aa).

The N-terminal stretch at 1–17 is a signal peptide; the sequence is MKFLNTFSLLSLAIIGS. The interval 18 to 367 is catalytic; the sequence is KAMKNISSKE…GLIKGLGNSI (350 aa). Glutamate 173 serves as the catalytic Proton donor. The Nucleophile role is filled by glutamate 295. The linker stretch occupies residues 365-387; the sequence is NSIKTRTTIRRTTTTTTSQSQPT. CBM10 domains are found at residues 391-427 and 436-473; these read SCFSVNLGYSCCNGCEVEYTDSDGEWGVENGNWCGIK and ICWSEKLGYPCCQNTSSVVYTDNDGKWGVENGNWCGIY.

The protein belongs to the glycosyl hydrolase 5 (cellulase A) family.

The catalysed reaction is Endohydrolysis of (1-&gt;4)-beta-D-glucosidic linkages in cellulose, lichenin and cereal beta-D-glucans.. In terms of biological role, rate of hydrolysis of cellulo-oligosaccharides increased with increasing chain length from cellotriose to cellopentaose. In Neocallimastix patriciarum (Rumen fungus), this protein is Endoglucanase B (CELB).